The sequence spans 208 residues: Interleukin-6 (208 aa).

Positions 1-27 (MTFLSTSAFSPLAFSLGLLLVVATAFP) are cleaved as a signal peptide. The cysteines at positions 68 and 74 are disulfide-linked. Phosphoserine is present on serine 77. Cysteines 97 and 107 form a disulfide.

The protein belongs to the IL-6 superfamily. As to quaternary structure, component of a hexamer of two molecules each of IL6, IL6R and IL6ST; first binds to IL6R to associate with the signaling subunit IL6ST. Interacts with IL6R (via the N-terminal ectodomain); this interaction may be affected by IL6R-binding with SORL1, hence decreasing IL6 cis signaling. Interacts with SORL1 (via the N-terminal ectodomain); this interaction leads to IL6 internalization and lysosomal degradation. May form a trimeric complex with the soluble SORL1 ectodomain and soluble IL6R receptor; this interaction might stabilize circulating IL6, hence promoting IL6 trans signaling.

Its subcellular location is the secreted. Its function is as follows. Cytokine with a wide variety of biological functions in immunity, tissue regeneration, and metabolism. Binds to IL6R, then the complex associates to the signaling subunit IL6ST/gp130 to trigger the intracellular IL6-signaling pathway. The interaction with the membrane-bound IL6R and IL6ST stimulates 'classic signaling', whereas the binding of IL6 and soluble IL6R to IL6ST stimulates 'trans-signaling'. Alternatively, 'cluster signaling' occurs when membrane-bound IL6:IL6R complexes on transmitter cells activate IL6ST receptors on neighboring receiver cells. In terms of biological role, IL6 is a potent inducer of the acute phase response. Rapid production of IL6 contributes to host defense during infection and tissue injury, but excessive IL6 synthesis is involved in disease pathology. In the innate immune response, is synthesized by myeloid cells, such as macrophages and dendritic cells, upon recognition of pathogens through toll-like receptors (TLRs) at the site of infection or tissue injury. In the adaptive immune response, is required for the differentiation of B cells into immunoglobulin-secreting cells. Plays a major role in the differentiation of CD4(+) T cell subsets. Essential factor for the development of T follicular helper (Tfh) cells that are required for the induction of germinal-center formation. Required to drive naive CD4(+) T cells to the Th17 lineage. Also required for proliferation of myeloma cells and the survival of plasmablast cells. Functionally, acts as an essential factor in bone homeostasis and on vessels directly or indirectly by induction of VEGF, resulting in increased angiogenesis activity and vascular permeability. Induces, through 'trans-signaling' and synergistically with IL1B and TNF, the production of VEGF. Involved in metabolic controls, is discharged into the bloodstream after muscle contraction increasing lipolysis and improving insulin resistance. 'Trans-signaling' in central nervous system also regulates energy and glucose homeostasis. Mediates, through GLP-1, crosstalk between insulin-sensitive tissues, intestinal L cells and pancreatic islets to adapt to changes in insulin demand. Also acts as a myokine. Plays a protective role during liver injury, being required for maintenance of tissue regeneration. Also has a pivotal role in iron metabolism by regulating HAMP/hepcidin expression upon inflammation or bacterial infection. Through activation of IL6ST-YAP-NOTCH pathway, induces inflammation-induced epithelial regeneration. The chain is Interleukin-6 (IL6) from Felis catus (Cat).